Reading from the N-terminus, the 493-residue chain is Non-cyanogenic beta-glucosidase (493 aa).

An N-terminal signal peptide occupies residues 1–18; sequence MDFIVAIFALFVISSFTI. The N-linked (GlcNAc...) asparagine glycan is linked to Asn34. Residues Gln54, His158, and 203–204 contribute to the a beta-D-glucoside site; that span reads NE. The Proton donor role is filled by Glu204. The N-linked (GlcNAc...) asparagine glycan is linked to Asn335. Residue Tyr346 coordinates a beta-D-glucoside. Asn371 and Asn412 each carry an N-linked (GlcNAc...) asparagine glycan. A beta-D-glucoside is bound by residues Glu422, Trp471, 478–479, and Phe487; that span reads EW. The Nucleophile role is filled by Glu422.

Belongs to the glycosyl hydrolase 1 family. In terms of tissue distribution, leaves.

It carries out the reaction Hydrolysis of terminal, non-reducing beta-D-glucosyl residues with release of beta-D-glucose.. The protein is Non-cyanogenic beta-glucosidase of Trifolium repens (Creeping white clover).